We begin with the raw amino-acid sequence, 360 residues long: Catabolic L-serine/threonine dehydratase (360 aa).

At Ser-2 the chain carries N-acetylserine. Lys-37 carries the post-translational modification N6-(pyridoxal phosphate)lysine.

This sequence belongs to the serine/threonine dehydratase family. The cofactor is pyridoxal 5'-phosphate.

The protein localises to the mitochondrion. It catalyses the reaction L-serine = pyruvate + NH4(+). It carries out the reaction L-threonine = 2-oxobutanoate + NH4(+). The polypeptide is Catabolic L-serine/threonine dehydratase (CHA1) (Saccharomyces cerevisiae (strain ATCC 204508 / S288c) (Baker's yeast)).